The following is a 244-amino-acid chain: Phosphonates import ATP-binding protein PhnC 2 (244 aa).

An ABC transporter domain is found at 6–244 (IECHNLETAY…LQAQFVVNNQ (239 aa)). ATP is bound at residue 41–48 (GLNGAGKS).

It belongs to the ABC transporter superfamily. Phosphonates importer (TC 3.A.1.9.1) family. In terms of assembly, the complex is composed of two ATP-binding proteins (PhnC), two transmembrane proteins (PhnE) and a solute-binding protein (PhnD).

The protein localises to the cell inner membrane. It carries out the reaction phosphonate(out) + ATP + H2O = phosphonate(in) + ADP + phosphate + H(+). Part of the ABC transporter complex PhnCDE involved in phosphonates import. Responsible for energy coupling to the transport system. The polypeptide is Phosphonates import ATP-binding protein PhnC 2 (Nostoc sp. (strain PCC 7120 / SAG 25.82 / UTEX 2576)).